The primary structure comprises 332 residues: DNA-directed RNA polymerase subunit alpha (332 aa).

An alpha N-terminal domain (alpha-NTD) region spans residues 1-232 (MKGYLKDFLK…DQLSVFVDLE (232 aa)). Residues 247–332 (IDPVLLRPID…SLGDRARIAG (86 aa)) are alpha C-terminal domain (alpha-CTD).

It belongs to the RNA polymerase alpha chain family. As to quaternary structure, homodimer. The RNAP catalytic core consists of 2 alpha, 1 beta, 1 beta' and 1 omega subunit. When a sigma factor is associated with the core the holoenzyme is formed, which can initiate transcription.

The enzyme catalyses RNA(n) + a ribonucleoside 5'-triphosphate = RNA(n+1) + diphosphate. In terms of biological role, DNA-dependent RNA polymerase catalyzes the transcription of DNA into RNA using the four ribonucleoside triphosphates as substrates. The sequence is that of DNA-directed RNA polymerase subunit alpha from Halorhodospira halophila (strain DSM 244 / SL1) (Ectothiorhodospira halophila (strain DSM 244 / SL1)).